The chain runs to 95 residues: Large ribosomal subunit protein eL37y (95 aa).

Positions 19, 22, 34, and 37 each coordinate Zn(2+). The C4-type zinc finger occupies 19–37 (CVRCGRRSFHIQKSRCSAC).

This sequence belongs to the eukaryotic ribosomal protein eL37 family. Requires Zn(2+) as cofactor.

Binds to the 23S rRNA. The chain is Large ribosomal subunit protein eL37y (RPL37B) from Arabidopsis thaliana (Mouse-ear cress).